A 517-amino-acid polypeptide reads, in one-letter code: MAAPEQPLAISRGCTSSSSLSPPRGDRTLLVRHLPAELTAEEKEDLLKYFGAQSVRVLSDKGRLKHTAFATFPNEKAAIKALTRLHQLKLLGHTLVVEFAKEQDRVHSPCPTSGSEKKKRSDDPVEDDKEKKELGYLTVENGIAPNHGLTFPLNSCLKYMYPPPSSTILANIVNALASVPKFYVQVLHLMNKMNLPTPFGPITARPPMYEDYMPLHAPLPPTSPQPPEEPPLPDEDEELSSEESEYESTDDEDRQRMNKLMELANLQPKRPKTIKQRHVRKKRKIKDMLNTPLCPSHSSLHPVLLPSDVFDQPQPVGNKRIEFHISTDMPAAFKKDLEKEQNCEEKNHDLPATEVDASNIGFGKIFPKPNLDITEEIKEDSDEMPSECISRRELEKGRISREEMETLSVFRSYEPGEPNCRIYVKNLAKHVQEKDLKYIFGRYVDFSSETQRIMFDIRLMKEGRMKGQAFIGLPNEKAAAKALKEANGYVLFGKPMVVQFARSARPKQDPKEGKRKC.

Residues 1 to 26 (MAAPEQPLAISRGCTSSSSLSPPRGD) are disordered. A necessary for interaction with PDCD7 region spans residues 1–257 (MAAPEQPLAI…STDDEDRQRM (257 aa)). Residue Ser21 is modified to Phosphoserine. Residues 27–102 (RTLLVRHLPA…HTLVVEFAKE (76 aa)) form the RRM 1 domain. Disordered stretches follow at residues 106 to 130 (VHSP…DDKE) and 213 to 254 (MPLH…DEDR). The residue at position 108 (Ser108) is a Phosphoserine. Basic and acidic residues predominate over residues 115 to 130 (SEKKKRSDDPVEDDKE). The segment at 211–380 (DYMPLHAPLP…LDITEEIKED (170 aa)) is necessary for binding to m(7)G-capped U12 snRNA. Residues 217 to 230 (APLPPTSPQPPEEP) show a composition bias toward pro residues. Residues 231-252 (PLPDEDEELSSEESEYESTDDE) are compositionally biased toward acidic residues. The RRM 2 domain occupies 420-503 (CRIYVKNLAK…KPMVVQFARS (84 aa)).

Component of the U11/U12 snRNPs that are part of the U12-type spliceosome. Found in a complex with m(7)G-capped U12 snRNA. Interacts with PDCD7. In terms of tissue distribution, highly expressed in pancreas and kidney. Detected at lower levels in heart, brain, placenta, lung, liver, spleen, thymus, prostate, testis, ovary, small intestine, colon and leukocytes.

It is found in the nucleus. In terms of biological role, participates in pre-mRNA U12-dependent splicing, performed by the minor spliceosome which removes U12-type introns. U12-type introns comprises less than 1% of all non-coding sequences. Binds to the 3'-stem-loop of m(7)G-capped U12 snRNA. This chain is RNA-binding region-containing protein 3 (RNPC3), found in Homo sapiens (Human).